A 120-amino-acid polypeptide reads, in one-letter code: NAD(P)H-quinone oxidoreductase subunit 3, chloroplastic (120 aa).

A run of 3 helical transmembrane segments spans residues 9-29 (IFWA…FISG), 64-84 (MFAL…PWAM), and 88-108 (VLGL…IVGL).

It belongs to the complex I subunit 3 family. As to quaternary structure, NDH is composed of at least 16 different subunits, 5 of which are encoded in the nucleus.

It is found in the plastid. It localises to the chloroplast thylakoid membrane. The enzyme catalyses a plastoquinone + NADH + (n+1) H(+)(in) = a plastoquinol + NAD(+) + n H(+)(out). It carries out the reaction a plastoquinone + NADPH + (n+1) H(+)(in) = a plastoquinol + NADP(+) + n H(+)(out). In terms of biological role, NDH shuttles electrons from NAD(P)H:plastoquinone, via FMN and iron-sulfur (Fe-S) centers, to quinones in the photosynthetic chain and possibly in a chloroplast respiratory chain. The immediate electron acceptor for the enzyme in this species is believed to be plastoquinone. Couples the redox reaction to proton translocation, and thus conserves the redox energy in a proton gradient. This Jasminum nudiflorum (Winter jasmine) protein is NAD(P)H-quinone oxidoreductase subunit 3, chloroplastic.